A 155-amino-acid polypeptide reads, in one-letter code: Endoribonuclease YbeY (155 aa).

Positions 114, 118, and 124 each coordinate Zn(2+).

It belongs to the endoribonuclease YbeY family. Zn(2+) serves as cofactor.

The protein resides in the cytoplasm. Single strand-specific metallo-endoribonuclease involved in late-stage 70S ribosome quality control and in maturation of the 3' terminus of the 16S rRNA. This Baumannia cicadellinicola subsp. Homalodisca coagulata protein is Endoribonuclease YbeY.